We begin with the raw amino-acid sequence, 948 residues long: Bifunctional glutamine synthetase adenylyltransferase/adenylyl-removing enzyme (948 aa).

Residues Met1–Asp444 are adenylyl removase. Residues Ala452 to Gly948 are adenylyl transferase.

It belongs to the GlnE family. The cofactor is Mg(2+).

The enzyme catalyses [glutamine synthetase]-O(4)-(5'-adenylyl)-L-tyrosine + phosphate = [glutamine synthetase]-L-tyrosine + ADP. The catalysed reaction is [glutamine synthetase]-L-tyrosine + ATP = [glutamine synthetase]-O(4)-(5'-adenylyl)-L-tyrosine + diphosphate. Functionally, involved in the regulation of glutamine synthetase GlnA, a key enzyme in the process to assimilate ammonia. When cellular nitrogen levels are high, the C-terminal adenylyl transferase (AT) inactivates GlnA by covalent transfer of an adenylyl group from ATP to specific tyrosine residue of GlnA, thus reducing its activity. Conversely, when nitrogen levels are low, the N-terminal adenylyl removase (AR) activates GlnA by removing the adenylyl group by phosphorolysis, increasing its activity. The regulatory region of GlnE binds the signal transduction protein PII (GlnB) which indicates the nitrogen status of the cell. This chain is Bifunctional glutamine synthetase adenylyltransferase/adenylyl-removing enzyme, found in Vibrio cholerae serotype O1 (strain ATCC 39315 / El Tor Inaba N16961).